A 465-amino-acid polypeptide reads, in one-letter code: SHC-transforming protein 1 (465 aa).

Residues 44–227 (MGPGVPYLVR…AGFDGSAWDE (184 aa)) enclose the PID domain. The CH1 stretch occupies residues 228 to 369 (EEEELPDHAY…SMEDQLKREP (142 aa)). The tract at residues 281-315 (VSGAEQDSRKMQPTLQGRERFPVPCSRPPNRPDLF) is disordered. The 92-residue stretch at 370-461 (WYQGKMSRKE…GSELCLQQPV (92 aa)) folds into the SH2 domain.

As to quaternary structure, interacts with grb2. As to expression, highly expressed in oocytes and embryo. Also expressed in liver. Detected in ovary, testis and heart and to a lesser extent in liver (at protein level).

It is found in the cytoplasm. Its function is as follows. Implicated in ras-dependent oocyte maturation induced by insulin/IGF1. This is SHC-transforming protein 1 (shc1) from Xenopus laevis (African clawed frog).